The following is a 332-amino-acid chain: Phenol 2-monooxygenase, oxygenase component MhpL (332 aa).

It belongs to the TmoE/XamoE family.

It carries out the reaction phenol + NADH + O2 + H(+) = catechol + NAD(+) + H2O. Its pathway is aromatic compound metabolism; phenol degradation. In terms of biological role, part of a multicomponent enzyme which catalyzes the degradation of phenol and some of its methylated derivatives. This is Phenol 2-monooxygenase, oxygenase component MhpL (mphL) from Acinetobacter pittii (strain PHEA-2).